The following is a 353-amino-acid chain: O-antigen biosynthesis glycosyltransferase WclY (353 aa).

Residues 116 to 136 (SLIWGLLWCSIWLFFDKLVIL) traverse the membrane as a helical segment. UDP contacts are provided by asparagine 190 and glutamate 271. Residues 263 to 271 (EGFGLTVLE) carry the E(x7)E glycosyltransferase motif motif.

This sequence belongs to the glycosyltransferase group 1 family. Glycosyltransferase 4 subfamily.

It localises to the membrane. It functions in the pathway bacterial outer membrane biogenesis; LPS O-antigen biosynthesis. Functionally, involved in the assembly of the O-repeating unit during O-antigen biosynthesis. N-acetylglucosamine transferase accountable for the alpha-D-GlcNAc-1,4-beta-D-Gal linkage within the O-antigen. This is O-antigen biosynthesis glycosyltransferase WclY from Escherichia coli.